Reading from the N-terminus, the 472-residue chain is Argininosuccinate lyase (472 aa).

This sequence belongs to the lyase 1 family. Argininosuccinate lyase subfamily.

Its subcellular location is the cytoplasm. It carries out the reaction 2-(N(omega)-L-arginino)succinate = fumarate + L-arginine. Its pathway is amino-acid biosynthesis; L-arginine biosynthesis; L-arginine from L-ornithine and carbamoyl phosphate: step 3/3. The chain is Argininosuccinate lyase from Synechococcus sp. (strain CC9605).